Reading from the N-terminus, the 830-residue chain is Envelope glycoprotein B (830 aa).

The first 19 residues, 1-19, serve as a signal peptide directing secretion; the sequence is MSKMRVLFLAVFLMNSVLM. The Virion surface portion of the chain corresponds to 20–688; the sequence is IYCDSDDYIR…GGVVSFLKNP (669 aa). 4 disulfide bridges follow: Cys41–Cys482, Cys58–Cys438, Cys131–Cys197, and Cys290–Cys337. The tract at residues 98–104 is involved in fusion and/or binding to host membrane; the sequence is SYRDVGV. Residue Asn155 is glycosylated (N-linked (GlcNAc...) asparagine; by host). Residues 184–191 are involved in fusion and/or binding to host membrane; sequence GPLWLYST. Residues Asn247, Asn286, Asn329, Asn361, and Asn486 are each glycosylated (N-linked (GlcNAc...) asparagine; by host). A disulfide bridge links Cys510 with Cys548. 2 hydrophobic membrane proximal region regions span residues 634-686 and 644-685; these read IEAK…SFLK and SYVN…VSFL. The chain crosses the membrane as a helical span at residues 689-709; that stretch reads FGGGLMLILAIVVVVIIIVVF. Residues 710–830 lie on the Intravirion side of the membrane; it reads VRQKHVLSKP…GYKSVNVEEA (121 aa). An Internalization motif motif is present at residues 822 to 825; the sequence is YKSV.

Belongs to the herpesviridae glycoprotein B family. As to quaternary structure, homotrimer; disulfide-linked. Binds to heparan sulfate proteoglycans. Interacts with gH/gL heterodimer. In terms of processing, a proteolytic cleavage by host furin generates two subunits that remain linked by disulfide bonds.

The protein resides in the virion membrane. It is found in the host cell membrane. Its subcellular location is the host endosome membrane. It localises to the host Golgi apparatus membrane. Envelope glycoprotein that forms spikes at the surface of virion envelope. Essential for the initial attachment to heparan sulfate moieties of the host cell surface proteoglycans. Involved in fusion of viral and cellular membranes leading to virus entry into the host cell. Following initial binding to its host receptors, membrane fusion is mediated by the fusion machinery composed at least of gB and the heterodimer gH/gL. May be involved in the fusion between the virion envelope and the outer nuclear membrane during virion egress. This is Envelope glycoprotein B from Homo sapiens (Human).